The sequence spans 1465 residues: Myomesin-2 (1465 aa).

Positions 38–61 (ASTQASSQKSLSQRSSSQRASSQT) are disordered. The segment covering 41 to 61 (QASSQKSLSQRSSSQRASSQT) has biased composition (low complexity). 2 consecutive Ig-like C2-type domains span residues 154 to 245 (PEIL…AAVV) and 266 to 371 (PLSS…AFLF). Fibronectin type-III domains are found at residues 385–480 (APMD…ALDP), 513–608 (PPTG…AQDV), 614–707 (APGR…VQAA), 710–812 (VPSH…TMPE), and 815–912 (PAYD…ARPG). Ig-like C2-type domains lie at 904 to 1002 (PVLV…EELE), 1130 to 1211 (PHFA…QDVS), and 1345 to 1434 (RLIG…VTVS). Positions 1442–1465 (IPDMAPPQQAKPKLIPASASAAGQ) are disordered.

As to quaternary structure, interacts with TTN/titin.

Its subcellular location is the cytoplasm. The protein localises to the myofibril. It localises to the sarcomere. The protein resides in the m line. Major component of the vertebrate myofibrillar M band. Binds myosin, titin, and light meromyosin. This binding is dose dependent. The protein is Myomesin-2 (MYOM2) of Homo sapiens (Human).